Reading from the N-terminus, the 300-residue chain is Nucleotide-binding protein Dshi_0209 (300 aa).

Glycine 20–threonine 27 is an ATP binding site. Residue aspartate 67–threonine 70 participates in GTP binding.

It belongs to the RapZ-like family.

In terms of biological role, displays ATPase and GTPase activities. This chain is Nucleotide-binding protein Dshi_0209, found in Dinoroseobacter shibae (strain DSM 16493 / NCIMB 14021 / DFL 12).